The sequence spans 241 residues: Phosphoribosyl isomerase A (241 aa).

The active-site Proton acceptor is the aspartate 11. Aspartate 130 serves as the catalytic Proton donor.

Belongs to the HisA/HisF family.

It is found in the cytoplasm. It carries out the reaction 1-(5-phospho-beta-D-ribosyl)-5-[(5-phospho-beta-D-ribosylamino)methylideneamino]imidazole-4-carboxamide = 5-[(5-phospho-1-deoxy-D-ribulos-1-ylimino)methylamino]-1-(5-phospho-beta-D-ribosyl)imidazole-4-carboxamide. The enzyme catalyses N-(5-phospho-beta-D-ribosyl)anthranilate = 1-(2-carboxyphenylamino)-1-deoxy-D-ribulose 5-phosphate. It functions in the pathway amino-acid biosynthesis; L-histidine biosynthesis; L-histidine from 5-phospho-alpha-D-ribose 1-diphosphate: step 4/9. The protein operates within amino-acid biosynthesis; L-tryptophan biosynthesis; L-tryptophan from chorismate: step 3/5. In terms of biological role, involved in both the histidine and tryptophan biosynthetic pathways. The sequence is that of Phosphoribosyl isomerase A from Streptomyces griseus subsp. griseus (strain JCM 4626 / CBS 651.72 / NBRC 13350 / KCC S-0626 / ISP 5235).